A 189-amino-acid polypeptide reads, in one-letter code: MASYGMGDLKKGLKIEIDGIPFKIVEYQHVKPGKGPAFVRIKIKSFIDGKVLEKTFHAGDKCESPNLEEKQMQYLYDDGENCQFMDTQTYEQVAISDEDVGEAKKWMLDGTMVDVLFHNGKAIGVEVPQVMELKIIETAPNFKGDTQGSNKKPATLETGAVVQIPFHVLEGEIIRVDTVRGEYIERANK.

The protein belongs to the elongation factor P family.

The protein localises to the cytoplasm. Its pathway is protein biosynthesis; polypeptide chain elongation. In terms of biological role, involved in peptide bond synthesis. Stimulates efficient translation and peptide-bond synthesis on native or reconstituted 70S ribosomes in vitro. Probably functions indirectly by altering the affinity of the ribosome for aminoacyl-tRNA, thus increasing their reactivity as acceptors for peptidyl transferase. This is Elongation factor P from Campylobacter lari (strain RM2100 / D67 / ATCC BAA-1060).